A 253-amino-acid polypeptide reads, in one-letter code: HTH-type transcriptional regulator YdeO (253 aa).

The region spanning Gly137–Glu233 is the HTH araC/xylS-type domain. DNA-binding regions (H-T-H motif) lie at residues Lys154–Gln175 and Val200–Phe223.

In terms of biological role, induces the expression of gadE and mdtEF. Could also regulate the expression of other genes involved in acid resistance. The protein is HTH-type transcriptional regulator YdeO of Escherichia coli O157:H7.